Consider the following 331-residue polypeptide: Cytochrome bo(3) ubiquinol oxidase subunit 2 (331 aa).

The first 23 residues, 1 to 23 (MTKANPFAALKWLSLAPALLLGG), serve as a signal peptide directing secretion. Cys-24 carries the N-palmitoyl cysteine lipid modification. Residue Cys-24 is the site of S-diacylglycerol cysteine attachment. Residues 24–41 (CDMTLFNPKGQVGMDERT) lie on the Periplasmic side of the membrane. A helical transmembrane segment spans residues 42–62 (LIITATLLMLIVVIPVIVMTL). At 63–86 (AFAWKYRASNTQAEYKPDWHHSNR) the chain is on the cytoplasmic side. The helical transmembrane segment at 87–107 (IEAVVWLVPCVIIAILGWITW) threads the bilayer. At 108-331 (ESTHKLDPYR…DMHMQPSTQE (224 aa)) the chain is on the periplasmic side.

This sequence belongs to the cytochrome c oxidase subunit 2 family. In terms of assembly, heterooctamer of two A chains, two B chains, two C chains and two D chains.

Its subcellular location is the cell inner membrane. In terms of biological role, cytochrome bo(3) ubiquinol terminal oxidase is the component of the aerobic respiratory chain of E.coli that predominates when cells are grown at high aeration. Has proton pump activity across the membrane in addition to electron transfer, pumping 2 protons/electron. The sequence is that of Cytochrome bo(3) ubiquinol oxidase subunit 2 (cyoA) from Pseudomonas aeruginosa (strain ATCC 15692 / DSM 22644 / CIP 104116 / JCM 14847 / LMG 12228 / 1C / PRS 101 / PAO1).